Here is a 436-residue protein sequence, read N- to C-terminus: uncharacterized protein (436 aa).

An N-terminal signal peptide occupies residues 1–19; that stretch reads MKKLLLASIIGLASTTSFA.

This is an uncharacterized protein from Rickettsia bellii (strain RML369-C).